The following is a 139-amino-acid chain: Endoribonuclease YbeY (139 aa).

3 residues coordinate Zn(2+): His-99, His-103, and His-109.

The protein belongs to the endoribonuclease YbeY family. It depends on Zn(2+) as a cofactor.

The protein resides in the cytoplasm. Its function is as follows. Single strand-specific metallo-endoribonuclease involved in late-stage 70S ribosome quality control and in maturation of the 3' terminus of the 16S rRNA. In Nautilia profundicola (strain ATCC BAA-1463 / DSM 18972 / AmH), this protein is Endoribonuclease YbeY.